Here is a 37-residue protein sequence, read N- to C-terminus: Large ribosomal subunit protein bL36c (37 aa).

The protein belongs to the bacterial ribosomal protein bL36 family.

It is found in the plastid. The protein resides in the chloroplast. This chain is Large ribosomal subunit protein bL36c, found in Coffea arabica (Arabian coffee).